The chain runs to 207 residues: Ribonuclease HII (207 aa).

Positions 20 to 207 (QLFAGVDEVG…KPVKRVLGIE (188 aa)) constitute an RNase H type-2 domain. Aspartate 26, glutamate 27, and aspartate 118 together coordinate a divalent metal cation.

The protein belongs to the RNase HII family. Mn(2+) is required as a cofactor. It depends on Mg(2+) as a cofactor.

The protein localises to the cytoplasm. It carries out the reaction Endonucleolytic cleavage to 5'-phosphomonoester.. Endonuclease that specifically degrades the RNA of RNA-DNA hybrids. The sequence is that of Ribonuclease HII from Aliivibrio fischeri (strain MJ11) (Vibrio fischeri).